Here is a 334-residue protein sequence, read N- to C-terminus: Anthranilate phosphoribosyltransferase (334 aa).

Residues glycine 79, 82 to 83, serine 87, 89 to 92, 107 to 115, and serine 119 each bind 5-phospho-alpha-D-ribose 1-diphosphate; these read GD, NIST, and KAGNRSISS. Residue glycine 79 coordinates anthranilate. Residue serine 91 coordinates Mg(2+). Asparagine 110 contacts anthranilate. Arginine 165 provides a ligand contact to anthranilate. The Mg(2+) site is built by aspartate 224 and glutamate 225.

Belongs to the anthranilate phosphoribosyltransferase family. In terms of assembly, homodimer. Mg(2+) serves as cofactor.

It carries out the reaction N-(5-phospho-beta-D-ribosyl)anthranilate + diphosphate = 5-phospho-alpha-D-ribose 1-diphosphate + anthranilate. The protein operates within amino-acid biosynthesis; L-tryptophan biosynthesis; L-tryptophan from chorismate: step 2/5. Its function is as follows. Catalyzes the transfer of the phosphoribosyl group of 5-phosphorylribose-1-pyrophosphate (PRPP) to anthranilate to yield N-(5'-phosphoribosyl)-anthranilate (PRA). In Streptococcus thermophilus (strain CNRZ 1066), this protein is Anthranilate phosphoribosyltransferase.